The following is a 233-amino-acid chain: Octanoyltransferase (233 aa).

One can recognise a BPL/LPL catalytic domain in the interval 32–213; sequence NNIDGILLLL…NFKMIFETDL (182 aa). Substrate is bound by residues 77-84, 144-146, and 157-159; these read RGGNVTYH, AIG, and GFA. The active-site Acyl-thioester intermediate is the Cys-175.

This sequence belongs to the LipB family.

It is found in the cytoplasm. It carries out the reaction octanoyl-[ACP] + L-lysyl-[protein] = N(6)-octanoyl-L-lysyl-[protein] + holo-[ACP] + H(+). The protein operates within protein modification; protein lipoylation via endogenous pathway; protein N(6)-(lipoyl)lysine from octanoyl-[acyl-carrier-protein]: step 1/2. Its function is as follows. Catalyzes the transfer of endogenously produced octanoic acid from octanoyl-acyl-carrier-protein onto the lipoyl domains of lipoate-dependent enzymes. Lipoyl-ACP can also act as a substrate although octanoyl-ACP is likely to be the physiological substrate. In Clostridium kluyveri (strain ATCC 8527 / DSM 555 / NBRC 12016 / NCIMB 10680 / K1), this protein is Octanoyltransferase.